The chain runs to 450 residues: Chromosomal replication initiator protein DnaA (450 aa).

Residues 1-84 (MENIHDLWDR…AVKFIIPPNQ (84 aa)) are domain I, interacts with DnaA modulators. A domain II region spans residues 84–111 (QADEKLELPSSAKKQRKPYEEANDFPQS). Residues 112 to 328 (MLNPKYTFDT…GALIRVVAYS (217 aa)) are domain III, AAA+ region. 4 residues coordinate ATP: Gly156, Gly158, Lys159, and Thr160. The domain IV, binds dsDNA stretch occupies residues 329–450 (SLINKEITAD…KEIQEKLKQL (122 aa)).

This sequence belongs to the DnaA family. As to quaternary structure, oligomerizes as a right-handed, spiral filament on DNA at oriC.

The protein resides in the cytoplasm. Its function is as follows. Plays an essential role in the initiation and regulation of chromosomal replication. ATP-DnaA binds to the origin of replication (oriC) to initiate formation of the DNA replication initiation complex once per cell cycle. Binds the DnaA box (a 9 base pair repeat at the origin) and separates the double-stranded (ds)DNA. Forms a right-handed helical filament on oriC DNA; dsDNA binds to the exterior of the filament while single-stranded (ss)DNA is stabiized in the filament's interior. The ATP-DnaA-oriC complex binds and stabilizes one strand of the AT-rich DNA unwinding element (DUE), permitting loading of DNA polymerase. After initiation quickly degrades to an ADP-DnaA complex that is not apt for DNA replication. Binds acidic phospholipids. This chain is Chromosomal replication initiator protein DnaA, found in Geobacillus thermodenitrificans (strain NG80-2).